The sequence spans 332 residues: Ferredoxin--NADP reductase (332 aa).

FAD-binding residues include Glu-36, Gln-44, Tyr-49, Val-91, Phe-124, and Thr-327.

It belongs to the ferredoxin--NADP reductase type 2 family. In terms of assembly, homodimer. FAD serves as cofactor.

The catalysed reaction is 2 reduced [2Fe-2S]-[ferredoxin] + NADP(+) + H(+) = 2 oxidized [2Fe-2S]-[ferredoxin] + NADPH. This is Ferredoxin--NADP reductase from Streptococcus thermophilus (strain CNRZ 1066).